A 360-amino-acid polypeptide reads, in one-letter code: Methionine import ATP-binding protein MetN (360 aa).

Residues 1 to 22 are disordered; sequence MSHTASTPTPEEYSAQQPSTQG. In terms of domain architecture, ABC transporter spans 25 to 265; it reads VEFRGITKVF…PQTQVAQKFV (241 aa). 62-69 serves as a coordination point for ATP; that stretch reads GYSGAGKS.

This sequence belongs to the ABC transporter superfamily. Methionine importer (TC 3.A.1.24) family. In terms of assembly, the complex is composed of two ATP-binding proteins (MetN), two transmembrane proteins (MetI) and a solute-binding protein (MetQ).

The protein resides in the cell membrane. It catalyses the reaction L-methionine(out) + ATP + H2O = L-methionine(in) + ADP + phosphate + H(+). The catalysed reaction is D-methionine(out) + ATP + H2O = D-methionine(in) + ADP + phosphate + H(+). In terms of biological role, part of the ABC transporter complex MetNIQ involved in methionine import. Responsible for energy coupling to the transport system. This is Methionine import ATP-binding protein MetN from Corynebacterium glutamicum (strain ATCC 13032 / DSM 20300 / JCM 1318 / BCRC 11384 / CCUG 27702 / LMG 3730 / NBRC 12168 / NCIMB 10025 / NRRL B-2784 / 534).